Here is a 229-residue protein sequence, read N- to C-terminus: Biosynthetic peptidoglycan transglycosylase (229 aa).

A helical membrane pass occupies residues 14–34 (FITWRFLLVVVLLLLVLLLVL).

Belongs to the glycosyltransferase 51 family.

It is found in the cell inner membrane. It carries out the reaction [GlcNAc-(1-&gt;4)-Mur2Ac(oyl-L-Ala-gamma-D-Glu-L-Lys-D-Ala-D-Ala)](n)-di-trans,octa-cis-undecaprenyl diphosphate + beta-D-GlcNAc-(1-&gt;4)-Mur2Ac(oyl-L-Ala-gamma-D-Glu-L-Lys-D-Ala-D-Ala)-di-trans,octa-cis-undecaprenyl diphosphate = [GlcNAc-(1-&gt;4)-Mur2Ac(oyl-L-Ala-gamma-D-Glu-L-Lys-D-Ala-D-Ala)](n+1)-di-trans,octa-cis-undecaprenyl diphosphate + di-trans,octa-cis-undecaprenyl diphosphate + H(+). Its pathway is cell wall biogenesis; peptidoglycan biosynthesis. Functionally, peptidoglycan polymerase that catalyzes glycan chain elongation from lipid-linked precursors. In Shewanella denitrificans (strain OS217 / ATCC BAA-1090 / DSM 15013), this protein is Biosynthetic peptidoglycan transglycosylase.